Here is a 151-residue protein sequence, read N- to C-terminus: Ribonuclease H (151 aa).

An RNase H type-1 domain is found at alanine 5 to alanine 146. Mg(2+)-binding residues include aspartate 14, glutamate 52, aspartate 74, and aspartate 138.

This sequence belongs to the RNase H family. In terms of assembly, monomer. Requires Mg(2+) as cofactor.

The protein localises to the cytoplasm. It carries out the reaction Endonucleolytic cleavage to 5'-phosphomonoester.. Functionally, endonuclease that specifically degrades the RNA of RNA-DNA hybrids. In Nitrobacter hamburgensis (strain DSM 10229 / NCIMB 13809 / X14), this protein is Ribonuclease H.